An 864-amino-acid chain; its full sequence is Leucine--tRNA ligase (864 aa).

The 'HIGH' region signature appears at 42–52 (PYPSGKLHMGH). The short motif at 624 to 628 (KMSKS) is the 'KMSKS' region element. Residue lysine 627 coordinates ATP.

Belongs to the class-I aminoacyl-tRNA synthetase family.

It is found in the cytoplasm. It catalyses the reaction tRNA(Leu) + L-leucine + ATP = L-leucyl-tRNA(Leu) + AMP + diphosphate. This Burkholderia multivorans (strain ATCC 17616 / 249) protein is Leucine--tRNA ligase.